A 427-amino-acid polypeptide reads, in one-letter code: Riboflavin transporter rft-1 (427 aa).

The Cytoplasmic segment spans residues 1 to 2 (MK). Residues 3–23 (TFLFTFCLVAIFGSSSWIGTN) form a helical membrane-spanning segment. The Extracellular segment spans residues 24-42 (SVWMELSLLTAKLPEGWNL). Residues 43–63 (PSYLSAIVQIACLGPLIYSII) traverse the membrane as a helical segment. Over 64–73 (HKGIKMTIPT) the chain is Cytoplasmic. The chain crosses the membrane as a helical span at residues 74 to 94 (VPLIFIFMVLACICQLGLCFF). Residues 95-111 (WDDTGYIFGAIRSWPLY) lie on the Extracellular side of the membrane. Residues 112-132 (LLLFGLAIVDAISSVLFLPFM) traverse the membrane as a helical segment. The Cytoplasmic segment spans residues 133 to 139 (AQFHPSF). Residues 140-160 (LNAYFVGMGLSALIPSLLSLI) form a helical membrane-spanning segment. Topologically, residues 161–184 (QGTSNYWCDDNKTPHYYPPRFSVS) are extracellular. Residues 185 to 205 (MFFLINFFFTCAAVAAFLVLY) traverse the membrane as a helical segment. The Cytoplasmic segment spans residues 206–261 (KIGAHKNSSQVEPEPKHSIQIIQGDSTTDVNEVNTESSFQETSSIPDSSSATGARL). The helical transmembrane segment at 262 to 282 (AFLLLTTALVNAQMNGIVTSV) threads the bilayer. Residues 283–297 (QSYATLVYSQNTYHY) are Extracellular-facing. The helical transmembrane segment at 298 to 318 (AVTLSNVISPLASYLQFFVKI) threads the bilayer. The Cytoplasmic segment spans residues 319 to 322 (RSLP). The chain crosses the membrane as a helical span at residues 323-343 (ILAFLTLCSSLTTAVIIYLAA). Residues 344-353 (LSPNWIFNSE) are Extracellular-facing. A helical transmembrane segment spans residues 354-374 (TAGTIISIASSLIAAGLHSYL). Residues 375 to 391 (RVMFAALLREGNQKESR) are Cytoplasmic-facing. A helical membrane pass occupies residues 392 to 412 (LFWCGAFIQIGSFTGSAIMFP). The Extracellular portion of the chain corresponds to 413-427 (LVNVWKLFHSAPSCR).

Belongs to the riboflavin transporter family. As to expression, expressed in intestine.

It localises to the cell membrane. It catalyses the reaction riboflavin(in) = riboflavin(out). With respect to regulation, activity is strongly inhibited by riboflavin analogs, such as lumiflavin and lumichrome. Riboflavin transporter. Riboflavin transport is Na(+)-independent but pH-sensitive. The protein is Riboflavin transporter rft-1 of Caenorhabditis elegans.